Consider the following 276-residue polypeptide: Large ribosomal subunit protein uL2 (276 aa).

Disordered regions lie at residues 26-45 and 224-276; these read RSTP…GRNC and AMNP…RGQK. Residues 259 to 276 are compositionally biased toward basic residues; that stretch reads RDKKKASSKLIIKRRGQK.

The protein belongs to the universal ribosomal protein uL2 family. As to quaternary structure, part of the 50S ribosomal subunit. Forms a bridge to the 30S subunit in the 70S ribosome.

In terms of biological role, one of the primary rRNA binding proteins. Required for association of the 30S and 50S subunits to form the 70S ribosome, for tRNA binding and peptide bond formation. It has been suggested to have peptidyltransferase activity; this is somewhat controversial. Makes several contacts with the 16S rRNA in the 70S ribosome. This chain is Large ribosomal subunit protein uL2, found in Oleidesulfovibrio alaskensis (strain ATCC BAA-1058 / DSM 17464 / G20) (Desulfovibrio alaskensis).